The sequence spans 359 residues: Phosphate acyltransferase (359 aa).

The disordered stretch occupies residues 335-359 (SGAGGAATGSPETDAPNPHPDSRAA).

This sequence belongs to the PlsX family. Homodimer. Probably interacts with PlsY.

The protein localises to the cytoplasm. The catalysed reaction is a fatty acyl-[ACP] + phosphate = an acyl phosphate + holo-[ACP]. It participates in lipid metabolism; phospholipid metabolism. Its function is as follows. Catalyzes the reversible formation of acyl-phosphate (acyl-PO(4)) from acyl-[acyl-carrier-protein] (acyl-ACP). This enzyme utilizes acyl-ACP as fatty acyl donor, but not acyl-CoA. This chain is Phosphate acyltransferase, found in Cupriavidus metallidurans (strain ATCC 43123 / DSM 2839 / NBRC 102507 / CH34) (Ralstonia metallidurans).